The chain runs to 416 residues: Na(+)/H(+) antiporter NhaA (416 aa).

A run of 11 helical transmembrane segments spans residues G39–A59, L82–I102, L119–V139, G146–G166, V175–F195, G198–L218, A234–L254, P281–G301, L315–A335, W353–I373, and G390–Q410.

It belongs to the NhaA Na(+)/H(+) (TC 2.A.33) antiporter family.

The protein resides in the cell inner membrane. It catalyses the reaction Na(+)(in) + 2 H(+)(out) = Na(+)(out) + 2 H(+)(in). Functionally, na(+)/H(+) antiporter that extrudes sodium in exchange for external protons. The protein is Na(+)/H(+) antiporter NhaA of Acidovorax sp. (strain JS42).